Reading from the N-terminus, the 1265-residue chain is 1-phosphatidylinositol 4,5-bisphosphate phosphodiesterase gamma-2 (1265 aa).

The region spanning arginine 20–glutamine 131 is the PH domain. The PI-PLC X-box domain maps to glutamine 312–lysine 456. Residues histidine 327 and histidine 372 contribute to the active site. 2 SH2 domains span residues tryptophan 532 to valine 635 and tryptophan 646 to valine 735. Phosphotyrosine; by BTK occurs at positions 753 and 759. The SH3 domain occupies methionine 769–threonine 829. The PI-PLC Y-box domain occupies leucine 930–arginine 1044. Residues leucine 1038–asparagine 1169 enclose the C2 domain. The residue at position 1197 (tyrosine 1197) is a Phosphotyrosine; by BTK. 2 positions are modified to phosphotyrosine: tyrosine 1217 and tyrosine 1245.

As to quaternary structure, part of a complex composed of EEIG1, TNFRSF11A/RANK, PLCG2, GAB2, TEC and BTK; complex formation increases in the presence of TNFSF11/RANKL. Interacts (via SH2 domain) with CSF1R (tyrosine phosphorylated). Interacts constitutively with THEMIS2. Requires Ca(2+) as cofactor. In terms of processing, phosphorylated on tyrosine residues by CSF1R. Phosphorylated on tyrosine residues by BTK and SYK; upon ligand-induced activation of a variety of growth factor receptors and immune system receptors. Phosphorylation leads to increased phospholipase activity.

It is found in the membrane raft. The catalysed reaction is a 1,2-diacyl-sn-glycero-3-phospho-(1D-myo-inositol-4,5-bisphosphate) + H2O = 1D-myo-inositol 1,4,5-trisphosphate + a 1,2-diacyl-sn-glycerol + H(+). The production of the second messenger molecules diacylglycerol (DAG) and inositol 1,4,5-trisphosphate (IP3) is mediated by activated phosphatidylinositol-specific phospholipase C enzymes. It is a crucial enzyme in transmembrane signaling. The polypeptide is 1-phosphatidylinositol 4,5-bisphosphate phosphodiesterase gamma-2 (Homo sapiens (Human)).